The sequence spans 104 residues: Probable monothiol glutaredoxin 2 (104 aa).

The 98-residue stretch at 7-104 folds into the Glutaredoxin domain; sequence FEFIENEIKN…NGELEKMLKG (98 aa). Lysine 24 contributes to the glutathione binding site. Residue cysteine 32 coordinates [2Fe-2S] cluster. Glutathione-binding positions include arginine 61, phenylalanine 73, and 86–87; that span reads CD.

Belongs to the glutaredoxin family. Monothiol subfamily.

This is Probable monothiol glutaredoxin 2 (grxC2) from Rickettsia felis (strain ATCC VR-1525 / URRWXCal2) (Rickettsia azadi).